The chain runs to 439 residues: Putative phosphatidate cytidylyltransferase (439 aa).

Residues Met1–Arg37 are disordered. Ser12 is subject to Phosphoserine. Residues Asn24–Thr33 are compositionally biased toward polar residues. 7 helical membrane passes run Phe52–Ala71, Trp76–Val98, Phe110–Ala130, Leu145–Val165, Phe180–Asn199, Gly245–Met265, and Phe321–Ala341.

This sequence belongs to the CDS family. Requires Mg(2+) as cofactor.

It localises to the endoplasmic reticulum membrane. It catalyses the reaction a 1,2-diacyl-sn-glycero-3-phosphate + CTP + H(+) = a CDP-1,2-diacyl-sn-glycerol + diphosphate. The protein operates within phospholipid metabolism; CDP-diacylglycerol biosynthesis; CDP-diacylglycerol from sn-glycerol 3-phosphate: step 3/3. Its function is as follows. Supplies CDP-diacylglycerol, which may play an important role as both a precursor to phosphoinositide biosynthesis in the plasma membrane and as a negative effector of phosphatidylinositol 4-kinase activity, thereby exerting an effect on cell proliferation via a lipid-dependent signal transduction cascade. This chain is Putative phosphatidate cytidylyltransferase, found in Schizosaccharomyces pombe (strain 972 / ATCC 24843) (Fission yeast).